The primary structure comprises 126 residues: Urease subunit beta (126 aa).

The protein belongs to the urease beta subunit family. Heterotrimer of UreA (gamma), UreB (beta) and UreC (alpha) subunits. Three heterotrimers associate to form the active enzyme.

It is found in the cytoplasm. It carries out the reaction urea + 2 H2O + H(+) = hydrogencarbonate + 2 NH4(+). It functions in the pathway nitrogen metabolism; urea degradation; CO(2) and NH(3) from urea (urease route): step 1/1. This Frankia casuarinae (strain DSM 45818 / CECT 9043 / HFP020203 / CcI3) protein is Urease subunit beta.